Here is a 747-residue protein sequence, read N- to C-terminus: DNA ligase (747 aa).

NAD(+) is bound by residues 113-117, 161-162, and glutamate 190; these read DRAYD and SI. Residue lysine 192 is the N6-AMP-lysine intermediate of the active site. NAD(+) contacts are provided by arginine 213, glutamate 249, lysine 364, and lysine 388. Zn(2+) is bound by residues cysteine 479, cysteine 482, cysteine 495, and cysteine 501. A BRCT domain is found at 660 to 747; the sequence is TTNAPLSDLT…EHDDTLTWPP (88 aa).

It belongs to the NAD-dependent DNA ligase family. LigA subfamily. The cofactor is Mg(2+). Mn(2+) serves as cofactor.

It catalyses the reaction NAD(+) + (deoxyribonucleotide)n-3'-hydroxyl + 5'-phospho-(deoxyribonucleotide)m = (deoxyribonucleotide)n+m + AMP + beta-nicotinamide D-nucleotide.. Functionally, DNA ligase that catalyzes the formation of phosphodiester linkages between 5'-phosphoryl and 3'-hydroxyl groups in double-stranded DNA using NAD as a coenzyme and as the energy source for the reaction. It is essential for DNA replication and repair of damaged DNA. The protein is DNA ligase of Haloquadratum walsbyi (strain DSM 16790 / HBSQ001).